The following is a 567-amino-acid chain: Asparagine--tRNA ligase, chloroplastic/mitochondrial (567 aa).

Positions 113-191 (NIMGWVRTLR…VELKVEKIIV (79 aa)) form a DNA-binding region, OB.

The protein belongs to the class-II aminoacyl-tRNA synthetase family.

It localises to the plastid. The protein localises to the chloroplast. The protein resides in the mitochondrion. It catalyses the reaction tRNA(Asn) + L-asparagine + ATP = L-asparaginyl-tRNA(Asn) + AMP + diphosphate + H(+). This Arabidopsis thaliana (Mouse-ear cress) protein is Asparagine--tRNA ligase, chloroplastic/mitochondrial.